The following is a 123-amino-acid chain: UPF0102 protein mma_0204 (123 aa).

It belongs to the UPF0102 family.

The protein is UPF0102 protein mma_0204 of Janthinobacterium sp. (strain Marseille) (Minibacterium massiliensis).